The sequence spans 350 residues: Protein YIPF3 (350 aa).

The segment covering 1–10 (MATTAAPAGG) has biased composition (low complexity). Positions 1-51 (MATTAAPAGGARNGAGPEWGGFEENIQGGGSAVIDMENMDDTSGSSFEDMG) are disordered. The residue at position 2 (alanine 2) is an N-acetylalanine. At 2–148 (ATTAAPAGGA…PIKMVNFPQK (147 aa)) the chain is on the cytoplasmic side. The helical transmembrane segment at 149–169 (IAGELYGPLMLVFTLVAILLH) threads the bilayer. The Lumenal portion of the chain corresponds to 170–187 (GMKTSDTIIREGTLMGTA). The helical transmembrane segment at 188–208 (IGTCFGYWLGVSSFIYFLAYL) threads the bilayer. At 209–214 (CNAQIT) the chain is on the cytoplasmic side. Residues 215–237 (MLQMLALLGYGLFGHCIVLFITY) traverse the membrane as a helical segment. Residues 238–240 (NIH) lie on the Lumenal side of the membrane. The chain crosses the membrane as a helical span at residues 241 to 263 (LHALFYLFWLLVGGLSTLRMVAV). Over 264 to 274 (LVSRTVGPTQR) the chain is Cytoplasmic. The helical transmembrane segment at 275–295 (LLLCGTLAALHMLFLLYLHFA) threads the bilayer. Residues 296–350 (YHKVVEGILDTLEGPNIPPIQRVPRDIPAMLPAARLPTTVLNATAKAVAVTLQSH) are Lumenal-facing. O-linked (GalNAc...) threonine glycosylation is found at threonine 333 and threonine 334. Asparagine 337 carries N-linked (GlcNAc...) asparagine glycosylation. Threonine 339 and threonine 346 each carry an O-linked (GalNAc...) threonine glycan.

The protein belongs to the YIP1 family. In terms of assembly, interacts with YIPF4 and YIPF5. N-glycosylated in the ER (40 kDa form I), then O-glycosylated in the Golgi apparatus (46 kDa form II), the C-terminal lumenal region is later removed in the Golgi apparatus to produce a 36 kDa form III. O-glycosylated with core 1-like and core 2-like glycans. O-glycan heterogeneity at Thr-346: HexNAc (minor), HexHexNAc (major), Hex1HexNAc2 (minor), Hex2HexNAc2 (minor) and dHex1Hex2HexNAc2 (minor). Expressed by nucleated hematopoietic cells (at protein level).

Its subcellular location is the cell membrane. The protein resides in the cytoplasm. It localises to the golgi apparatus. It is found in the cis-Golgi network membrane. In terms of biological role, involved in the maintenance of the Golgi structure. May play a role in hematopoiesis. The chain is Protein YIPF3 (YIPF3) from Homo sapiens (Human).